Here is a 151-residue protein sequence, read N- to C-terminus: Ribosome maturation factor RimP (151 aa).

The protein belongs to the RimP family.

Its subcellular location is the cytoplasm. Functionally, required for maturation of 30S ribosomal subunits. In Haemophilus influenzae (strain 86-028NP), this protein is Ribosome maturation factor RimP.